We begin with the raw amino-acid sequence, 110 residues long: Large ribosomal subunit protein uL22 (110 aa).

This sequence belongs to the universal ribosomal protein uL22 family. As to quaternary structure, part of the 50S ribosomal subunit.

This protein binds specifically to 23S rRNA; its binding is stimulated by other ribosomal proteins, e.g. L4, L17, and L20. It is important during the early stages of 50S assembly. It makes multiple contacts with different domains of the 23S rRNA in the assembled 50S subunit and ribosome. Its function is as follows. The globular domain of the protein is located near the polypeptide exit tunnel on the outside of the subunit, while an extended beta-hairpin is found that lines the wall of the exit tunnel in the center of the 70S ribosome. The chain is Large ribosomal subunit protein uL22 from Haemophilus ducreyi (strain 35000HP / ATCC 700724).